Reading from the N-terminus, the 61-residue chain is [Thr6]-bradykinyl-Val,Asp (61 aa).

An N-terminal signal peptide occupies residues M1–C22. A propeptide spanning residues E23–E50 is cleaved from the precursor. A disordered region spans residues E24 to D61. The span at K26–R36 shows a compositional bias: acidic residues. The span at E37 to P52 shows a compositional bias: basic and acidic residues. 4-hydroxyproline; in form [Hyp3,Thr6]-bradykinyl-Val,Asp and [Hyp3,Thr6]-bradykinin is present on P53.

Belongs to the frog skin active peptide (FSAP) family. Bradykinin-related peptide subfamily. As to expression, expressed by the skin glands.

The protein localises to the secreted. Functionally, induces relaxation of rat smooth muscle from tail artery (EC(50)=16.8 nM) and contraction of that from ileum (EC(50)=205 nM), urinary bladder (EC(50)=895 nM) and uterus (EC(50)=60.3 nM). Binds to both bradykinin receptor B1 (BDKRB1) and B2 (BDKRB2). Its function is as follows. [Hyp3,Thr6]-bradykinin: Induces relaxation of rat smooth muscle from tail artery (EC(50)=56.7 nM) and contraction of that from ileum (EC(50)=588 nM), urinary bladder (EC(50)=4.6 uM) and uterus (EC(50)=3.9 nM). Binds to both bradykinin receptor B1 (BDKRB1) and B2 (BDKRB2). In arterial smooth muscle, the effect via BDKRB1 is stronger, in uterus, ileum and urinary bladder the effect via BDKRB2. In terms of biological role, induces relaxation of rat smooth muscle from tail artery (EC(50)=10.8 nM) and contraction of that from ileum (EC(50)=645 nM), urinary bladder (EC(50)=1.1 uM) and uterus (EC(50)=1.2 uM). Binds to both bradykinin receptor B1 (BDKRB1) and B2 (BDKRB2). Apart from uterus smooth muscle, the effect via BDKRB2 is stronger. [Hyp3,Thr6]-bradykinyl-Val,Asp: Induces relaxation of rat smooth muscle from tail artery (EC(50)=3.5 nM) and contraction of that from ileum (EC(50)=223 nM), urinary bladder (EC(50)=1.5 uM) and uterus (EC(50)=356 nM). Binds to both bradykinin receptor B1 (BDKRB1) and B2 (BDKRB2); the effects via BDKRB2 are stronger. The sequence is that of [Thr6]-bradykinyl-Val,Asp from Agalychnis dacnicolor (Giant Mexican leaf frog).